The following is a 256-amino-acid chain: Triosephosphate isomerase (256 aa).

9-11 (NWK) provides a ligand contact to substrate. Histidine 94 serves as the catalytic Electrophile. Glutamate 166 (proton acceptor) is an active-site residue. Residues glycine 172, serine 211, and 232–233 (GG) contribute to the substrate site.

This sequence belongs to the triosephosphate isomerase family. As to quaternary structure, homodimer.

It is found in the cytoplasm. The enzyme catalyses D-glyceraldehyde 3-phosphate = dihydroxyacetone phosphate. Its pathway is carbohydrate biosynthesis; gluconeogenesis. The protein operates within carbohydrate degradation; glycolysis; D-glyceraldehyde 3-phosphate from glycerone phosphate: step 1/1. Functionally, involved in the gluconeogenesis. Catalyzes stereospecifically the conversion of dihydroxyacetone phosphate (DHAP) to D-glyceraldehyde-3-phosphate (G3P). The chain is Triosephosphate isomerase from Natranaerobius thermophilus (strain ATCC BAA-1301 / DSM 18059 / JW/NM-WN-LF).